A 2025-amino-acid chain; its full sequence is E3 ubiquitin-protein ligase TRIP12 (2025 aa).

Residues 1 to 10 are compositionally biased toward polar residues; that stretch reads MSNRPNNNPG. The interval 1–404 is disordered; sequence MSNRPNNNPG…SGESESDDSE (404 aa). The residue at position 2 (Ser-2) is an N-acetylserine. Residue Ser-12 is modified to Phosphoserine. Residues 18 to 27 show a composition bias toward polar residues; sequence RNTAGAQPQD. Residues 48 to 70 are compositionally biased toward basic and acidic residues; sequence DPDRANTSERQKTGQVPKKDNSR. A phosphoserine mark is found at Ser-77, Ser-85, and Ser-100. Positions 78–88 are enriched in polar residues; the sequence is PDYNRTNSPSS. Residues 119 to 132 are compositionally biased toward polar residues; it reads EQQLKSAQLPSTSK. 2 stretches are compositionally biased toward low complexity: residues 154-166 and 177-215; these read SSCV…SEST and KLAS…ASST. At Lys-181 the chain carries N6-acetyllysine. Residues 280–290 show a composition bias toward polar residues; it reads PGSSKSETSKP. Phosphoserine occurs at positions 310 and 312. Over residues 326–338 the composition is skewed to polar residues; it reads QKTTGSCASTSRR. Residues 346–358 show a composition bias toward basic and acidic residues; it reads GAAEARRQEKMAD. The segment covering 360–371 has biased composition (polar residues); it reads ESNQETVNSSAA. Positions 379 to 397 are enriched in low complexity; it reads GAAASSSVAGAVGMTTSGE. A WWE domain is found at 755-869; sequence MLKKGNAQNT…DPELAKSFIK (115 aa). The segment at 970 to 1077 is disordered; sequence ESLLTSPPKA…QSPKSSFLAS (108 aa). The residue at position 975 (Ser-975) is a Phosphoserine. A compositionally biased stretch (low complexity) spans 983–1006; it reads GSGSLGSTTPASSGTATAATNASA. 2 positions are modified to phosphoserine: Ser-1024 and Ser-1030. Over residues 1034 to 1047 the composition is skewed to basic residues; that stretch reads KRKRLPKRGPRRPK. Ser-1049 carries the post-translational modification Phosphoserine. Positions 1050-1059 are enriched in basic and acidic residues; that stretch reads PPRDDDKVDN. Over residues 1062 to 1073 the composition is skewed to low complexity; that stretch reads KSPTTTQSPKSS. Phosphoserine occurs at positions 1063, 1350, 1355, 1362, and 1409. Thr-1410 carries the phosphothreonine modification. 2 disordered regions span residues 1441–1466 and 1601–1620; these read TKDC…NAKK and TNPE…PRLD. An N6-acetyllysine modification is found at Lys-1458. A Phosphoserine modification is found at Ser-1460. Residues 1529–1603 are K-box; sequence EIIPTSEFIN…AMQRLLDTNP (75 aa). The region spanning 1918–2025 is the HECT domain; that stretch reads PDHGYTHDSR…REGQQSFHLS (108 aa). The active-site Glycyl thioester intermediate is Cys-1992.

Belongs to the UPL family. K-HECT subfamily. In terms of assembly, interacts with MYC; leading to disrupt interaction with isoform p19ARF/ARF of CDKN2A. Interacts with TRADD; leading to disrupt interaction with isoform p19ARF/ARF of CDKN2A. Interacts with SMARCC1; leading to disrupt interaction with SMARCE1.

The protein localises to the nucleus. Its subcellular location is the nucleoplasm. It carries out the reaction S-ubiquitinyl-[E2 ubiquitin-conjugating enzyme]-L-cysteine + [acceptor protein]-L-lysine = [E2 ubiquitin-conjugating enzyme]-L-cysteine + N(6)-ubiquitinyl-[acceptor protein]-L-lysine.. The protein operates within protein modification; protein ubiquitination. In terms of biological role, E3 ubiquitin-protein ligase involved in ubiquitin fusion degradation (UFD) pathway and regulation of DNA repair. Part of the ubiquitin fusion degradation (UFD) pathway, a process that mediates ubiquitination of protein at their N-terminus, regardless of the presence of lysine residues in target proteins. Acts as a key regulator of DNA damage response by acting as a suppressor of RNF168, an E3 ubiquitin-protein ligase that promotes accumulation of 'Lys-63'-linked histone H2A and H2AX at DNA damage sites, thereby acting as a guard against excessive spreading of ubiquitinated chromatin at damaged chromosomes. In normal cells, mediates ubiquitination and degradation of isoform p19ARF/ARF of CDKN2A, a lysine-less tumor suppressor required for p53/TP53 activation under oncogenic stress. In cancer cells, however, isoform p19ARF/ARF and TRIP12 are located in different cell compartments, preventing isoform p19ARF/ARF ubiquitination and degradation. Does not mediate ubiquitination of isoform p16-INK4a of CDKN2A. Also catalyzes ubiquitination of NAE1 and SMARCE1, leading to their degradation. Ubiquitination and degradation of target proteins is regulated by interaction with proteins such as MYC, TRADD or SMARCC1, which disrupt the interaction between TRIP12 and target proteins. Mediates ubiquitination of ASXL1: following binding to N(6)-methyladenosine methylated DNA, ASXL1 is ubiquitinated by TRIP12, leading to its degradation and subsequent inactivation of the PR-DUB complex. The sequence is that of E3 ubiquitin-protein ligase TRIP12 (Trip12) from Mus musculus (Mouse).